The sequence spans 410 residues: Pectate lyase PEL9 (410 aa).

An N-terminal signal peptide occupies residues 1–18 (MMGKSVWVFAALFPAVLA). Positions 191, 215, 216, and 219 each coordinate Ca(2+). N234 carries an N-linked (GlcNAc...) asparagine glycan. K271 (proton acceptor) is an active-site residue. Residues 342-351 (GEAPTSLSDE) show a composition bias toward polar residues. 2 disordered regions span residues 342–361 (GEAP…SWDG) and 381–410 (ERNA…DWSA).

This sequence belongs to the polysaccharide lyase 9 family. Ca(2+) serves as cofactor.

Its subcellular location is the secreted. It carries out the reaction Eliminative cleavage of (1-&gt;4)-alpha-D-galacturonan to give oligosaccharides with 4-deoxy-alpha-D-galact-4-enuronosyl groups at their non-reducing ends.. Inhibited by iron ions. Activated in presence of the surfactant polysorbate 20, while inhibited in the presence of Triton X-100 and sodium dodecyl sulfate. Inhibited in presence of the organic solvents methanol, ethanol, propan-2-ol and acetone. In terms of biological role, presents an endo-cleaving activity on the homogalacturonan (HG) region in pectin. Active on homogalacturonan with a degree of polymerization above 4, and does not appear to be affected by the degree of methylation of the substrate. Does not degrade linear rhamnogalacturonan. This chain is Pectate lyase PEL9, found in Emericella nidulans (strain FGSC A4 / ATCC 38163 / CBS 112.46 / NRRL 194 / M139) (Aspergillus nidulans).